The following is a 762-amino-acid chain: Phospholipase D alpha 4 (762 aa).

The C2 domain maps to M1 to A116. Residue D172 participates in Ca(2+) binding. One can recognise a PLD phosphodiesterase 1 domain in the interval T301 to R339. Catalysis depends on residues H306, K308, and D313. H306 lines the a 1,2-diacyl-sn-glycero-3-phosphate pocket. Residues H345 and H377 each contribute to the Ca(2+) site. The a 1,2-diacyl-sn-glycero-3-phosphate site is built by Q477 and H615. The 28-residue stretch at F610–S637 folds into the PLD phosphodiesterase 2 domain. Catalysis depends on residues H615, K617, and D622. E671 is a binding site for Ca(2+).

The protein belongs to the phospholipase D family. C2-PLD subfamily. The cofactor is Ca(2+). Expressed in roots, leaves, stems, siliques,flowers and inflorescences.

The protein resides in the cell membrane. The enzyme catalyses a 1,2-diacyl-sn-glycero-3-phosphocholine + H2O = a 1,2-diacyl-sn-glycero-3-phosphate + choline + H(+). Functionally, hydrolyzes glycerol-phospholipids at the terminal phosphodiesteric bond to generate phosphatidic acids (PA). Promotes growth and plays a role in nitrogen signaling. The protein is Phospholipase D alpha 4 of Arabidopsis thaliana (Mouse-ear cress).